Reading from the N-terminus, the 381-residue chain is GDP-mannose transporter (381 aa).

The Cytoplasmic segment spans residues 1 to 39 (MVESKKTDDYAIEMDKIDQGSKNFEAAAPPQPRSVPSSS). Residues 40-60 (LSGNPVLPVLAYCGSSILMTV) traverse the membrane as a helical segment. Residues 61-68 (MNKYVLSG) are Lumenal-facing. A helical membrane pass occupies residues 69–89 (LDFNLNFFLLCVQSIVCIIAI). Topologically, residues 90–109 (QTCKFCGLITYRDFSADEAK) are cytoplasmic. The chain crosses the membrane as a helical span at residues 110–126 (KWFPISLLLIGMIYTGS). Topologically, residues 127–133 (KALQFLS) are lumenal. The helical transmembrane segment at 134–150 (IPVYTIFKNLTIILIAY) threads the bilayer. Over 151–159 (GEVLWFGGS) the chain is Cytoplasmic. A helical transmembrane segment spans residues 160 to 181 (VTGLTLFSFGLMVLSSIIAAWA). The Lumenal portion of the chain corresponds to 182 to 199 (DIKHAVESSGDTSAQVST). Residues 200-220 (LNAGYIWMLINCLCTSSYVLG) form a helical membrane-spanning segment. Residues 221–232 (MRKRIKLTNFKD) lie on the Cytoplasmic side of the membrane. Residues 233 to 253 (FDTMFYNNLLSIPVLVVLTGL) form a helical membrane-spanning segment. The Lumenal segment spans residues 254–273 (MEDWSSANIDRNFPQADRSS). The chain crosses the membrane as a helical span at residues 274-294 (IMFAMILSGLSSVFISYTSAW). The Cytoplasmic portion of the chain corresponds to 295–302 (CVRVTSST). The helical transmembrane segment at 303–323 (TYSMVGALNKLPIALSGLIFF) threads the bilayer. Residues 324–326 (DAP) are Lumenal-facing. A helical membrane pass occupies residues 327-347 (VTFPSVSAIAVGFVSGIVYAI). Residues 348–381 (AKIKQNAKPKTGVLPTSNPLVSASSQSMRDSLRS) lie on the Cytoplasmic side of the membrane.

This sequence belongs to the TPT transporter family. SLC35D subfamily. Homooligomer.

It localises to the golgi apparatus membrane. The protein localises to the cytoplasmic vesicle membrane. Its subcellular location is the endoplasmic reticulum membrane. In terms of biological role, involved in the import of GDP-mannose from the cytoplasm into the Golgi lumen. In Aspergillus oryzae (strain ATCC 42149 / RIB 40) (Yellow koji mold), this protein is GDP-mannose transporter (gmt1).